A 267-amino-acid polypeptide reads, in one-letter code: Phosphate import ATP-binding protein PstB (267 aa).

One can recognise an ABC transporter domain in the interval 21-262 (VAARNLDFYY…PSKQQTEDYI (242 aa)). Position 53-60 (53-60 (GPSGCGKS)) interacts with ATP.

Belongs to the ABC transporter superfamily. Phosphate importer (TC 3.A.1.7) family. As to quaternary structure, the complex is composed of two ATP-binding proteins (PstB), two transmembrane proteins (PstC and PstA) and a solute-binding protein (PstS).

It is found in the cell inner membrane. It catalyses the reaction phosphate(out) + ATP + H2O = ADP + 2 phosphate(in) + H(+). Functionally, part of the ABC transporter complex PstSACB involved in phosphate import. Responsible for energy coupling to the transport system. This Xanthomonas axonopodis pv. citri (strain 306) protein is Phosphate import ATP-binding protein PstB.